Here is an 86-residue protein sequence, read N- to C-terminus: Superoxide dismutase [Cu-Zn] (86 aa).

The disordered stretch occupies residues 1–26; the sequence is AKEKGGKLTAGLAAGGHWNPNKAPHH. Residues 7-16 are compositionally biased toward low complexity; that stretch reads KLTAGLAAGG. Residue H17 coordinates Cu cation. Zn(2+) is bound by residues H17, H26, H35, and D38. Residue H73 participates in Cu cation binding.

The protein belongs to the Cu-Zn superoxide dismutase family. As to quaternary structure, homodimer. Requires Cu cation as cofactor. Zn(2+) serves as cofactor.

The protein resides in the periplasm. It catalyses the reaction 2 superoxide + 2 H(+) = H2O2 + O2. Its function is as follows. Destroys radicals which are normally produced within the cells and which are toxic to biological systems. The chain is Superoxide dismutase [Cu-Zn] (sodC) from Mannheimia haemolytica (Pasteurella haemolytica).